A 226-amino-acid polypeptide reads, in one-letter code: MTTTELVALLHLASPALPIGAYSYSQGLEAALDANLIRDADSARDWIASGLTDVLAHGELPFLAHQLARWQTHDTHALAAENAWFVASRESAELRRETEQMGWSLAQLCASLEWGDAARRATLASLSPIALPTAFAYAAAAHDAGADATLAAYAFGWVENQTSAALKAVPLGQLAGQRIIVALRGAIDAAVRRALATPPDAVNTFAPQLGILSARHETQYSRLFRS.

Belongs to the UreF family. UreD, UreF and UreG form a complex that acts as a GTP-hydrolysis-dependent molecular chaperone, activating the urease apoprotein by helping to assemble the nickel containing metallocenter of UreC. The UreE protein probably delivers the nickel.

It is found in the cytoplasm. In terms of biological role, required for maturation of urease via the functional incorporation of the urease nickel metallocenter. This is Urease accessory protein UreF from Burkholderia cenocepacia (strain HI2424).